We begin with the raw amino-acid sequence, 193 residues long: Molybdenum cofactor guanylyltransferase (193 aa).

GTP-binding positions include 8-10 (LAG), Lys21, Asp67, and Asp98. A Mg(2+)-binding site is contributed by Asp98.

This sequence belongs to the MobA family. As to quaternary structure, monomer. Mg(2+) is required as a cofactor.

It is found in the cytoplasm. The enzyme catalyses Mo-molybdopterin + GTP + H(+) = Mo-molybdopterin guanine dinucleotide + diphosphate. In terms of biological role, transfers a GMP moiety from GTP to Mo-molybdopterin (Mo-MPT) cofactor (Moco or molybdenum cofactor) to form Mo-molybdopterin guanine dinucleotide (Mo-MGD) cofactor. The protein is Molybdenum cofactor guanylyltransferase of Cereibacter sphaeroides (Rhodobacter sphaeroides).